Reading from the N-terminus, the 426-residue chain is Serine--tRNA ligase (426 aa).

Residue 235–237 (TAE) coordinates L-serine. Residue 266 to 268 (RRE) participates in ATP binding. Residue glutamate 289 coordinates L-serine. Position 353–356 (353–356 (EISS)) interacts with ATP. Serine 389 is an L-serine binding site.

It belongs to the class-II aminoacyl-tRNA synthetase family. Type-1 seryl-tRNA synthetase subfamily. In terms of assembly, homodimer. The tRNA molecule binds across the dimer.

It is found in the cytoplasm. The catalysed reaction is tRNA(Ser) + L-serine + ATP = L-seryl-tRNA(Ser) + AMP + diphosphate + H(+). It catalyses the reaction tRNA(Sec) + L-serine + ATP = L-seryl-tRNA(Sec) + AMP + diphosphate + H(+). Its pathway is aminoacyl-tRNA biosynthesis; selenocysteinyl-tRNA(Sec) biosynthesis; L-seryl-tRNA(Sec) from L-serine and tRNA(Sec): step 1/1. Its function is as follows. Catalyzes the attachment of serine to tRNA(Ser). Is also able to aminoacylate tRNA(Sec) with serine, to form the misacylated tRNA L-seryl-tRNA(Sec), which will be further converted into selenocysteinyl-tRNA(Sec). This chain is Serine--tRNA ligase, found in Nostoc sp. (strain PCC 7120 / SAG 25.82 / UTEX 2576).